The primary structure comprises 253 residues: Troponin T, fast skeletal muscle isoforms (253 aa).

Over residues 1-25 (MSDTEEVEHGEEEYEEEEEVQEEEV) the composition is skewed to acidic residues. Disordered stretches follow at residues 1–58 (MSDT…DIQK) and 97–178 (RAER…VLAE). The residue at position 2 (Ser2) is an N-acetylserine. 3 stretches are compositionally biased toward basic and acidic residues: residues 46–58 (PEGE…DIQK), 97–139 (RAER…DDLK), and 167–178 (TARETKKKVLAE).

Belongs to the troponin T family.

Its function is as follows. Troponin T is the tropomyosin-binding subunit of troponin, the thin filament regulatory complex which confers calcium-sensitivity to striated muscle actomyosin ATPase activity. This is Troponin T, fast skeletal muscle isoforms (TNNT3) from Coturnix japonica (Japanese quail).